The primary structure comprises 346 residues: S-adenosylmethionine:tRNA ribosyltransferase-isomerase (346 aa).

The protein belongs to the QueA family. As to quaternary structure, monomer.

The protein localises to the cytoplasm. The catalysed reaction is 7-aminomethyl-7-carbaguanosine(34) in tRNA + S-adenosyl-L-methionine = epoxyqueuosine(34) in tRNA + adenine + L-methionine + 2 H(+). It functions in the pathway tRNA modification; tRNA-queuosine biosynthesis. In terms of biological role, transfers and isomerizes the ribose moiety from AdoMet to the 7-aminomethyl group of 7-deazaguanine (preQ1-tRNA) to give epoxyqueuosine (oQ-tRNA). The polypeptide is S-adenosylmethionine:tRNA ribosyltransferase-isomerase (Chloroherpeton thalassium (strain ATCC 35110 / GB-78)).